The following is a 626-amino-acid chain: Transketolase-like protein 2 (626 aa).

Residues Ser-41, His-78, and 124–126 (GSL) contribute to the thiamine diphosphate site. Position 156 (Asp-156) interacts with Mg(2+). Residues Gly-157 and Asn-186 each contribute to the thiamine diphosphate site. The Mg(2+) site is built by Asn-186 and Leu-188. Lys-248 and His-262 together coordinate thiamine diphosphate. His-262 and Ser-349 together coordinate substrate. Positions 370 and 396 each coordinate thiamine diphosphate. The active-site Proton donor is Glu-370. 2 residues coordinate substrate: His-420 and Asp-428. Gln-432 contacts thiamine diphosphate.

It belongs to the transketolase family. As to quaternary structure, homodimer. Mg(2+) serves as cofactor. Ca(2+) is required as a cofactor. The cofactor is Mn(2+). Requires Co(2+) as cofactor. It depends on thiamine diphosphate as a cofactor. Overexpressed in hepatoma cancer cells.

The enzyme catalyses D-sedoheptulose 7-phosphate + D-glyceraldehyde 3-phosphate = aldehydo-D-ribose 5-phosphate + D-xylulose 5-phosphate. Plays an essential role in total transketolase activity and cell proliferation in cancer cells; after transfection with anti-TKTL1 siRNA, total transketolase activity dramatically decreases and proliferation was significantly inhibited in cancer cells. Plays a pivotal role in carcinogenesis. The polypeptide is Transketolase-like protein 2 (TKTL2) (Homo sapiens (Human)).